The chain runs to 488 residues: Cobyric acid synthase (488 aa).

The 194-residue stretch at 247–440 (LLRVIVPVLP…VHGVFDEPTA (194 aa)) folds into the GATase cobBQ-type domain. Cys-328 acts as the Nucleophile in catalysis. The active site involves His-432.

It belongs to the CobB/CobQ family. CobQ subfamily.

The protein operates within cofactor biosynthesis; adenosylcobalamin biosynthesis. Its function is as follows. Catalyzes amidations at positions B, D, E, and G on adenosylcobyrinic A,C-diamide. NH(2) groups are provided by glutamine, and one molecule of ATP is hydrogenolyzed for each amidation. The sequence is that of Cobyric acid synthase from Cupriavidus pinatubonensis (strain JMP 134 / LMG 1197) (Cupriavidus necator (strain JMP 134)).